Consider the following 452-residue polypeptide: Major royal jelly protein 2 (452 aa).

The N-terminal stretch at 1-17 (MTRWLFMVACLGIACQG) is a signal peptide. N-linked (GlcNAc...) asparagine glycans are attached at residues Asn145 and Asn178. Residues 416 to 452 (NNNQNDNIQNTNNQNDNNQKNNKKNANNQKNNNQNDN) form a disordered region.

In terms of processing, N-linked core structure contains mannose (which consists of 8-alpha-mannosyl residues, one beta-mannosyl residue, and chitobiose). In terms of tissue distribution, secreted from the hypopharyngeal glands of the worker honey bee (at protein level); expression peaks at 12 days post eclosion. Expressed in the brains of adult worker bees peaking at 12 days post eclosion (at protein level). Expressed in the spermatheca of adult queen bees (at protein level); Expression levels are higher in mated queens than in virgin queens.

Its subcellular location is the secreted. Highly abundant protein component of royal jelly, a substance produced in the hypopharyngeal gland containing proteins, free amino acids, fatty acids, sugars and other nutrients, which is fed to developing larvae by worker nurse bees. Major royal jelly proteins (MRJPs) are high in essential amino acids and probably have a nutritional function in larval food. All larvae are fed some royal jelly (also known as worker jelly) early in their development but it forms the principal source of nutrition for larvae destined to become queen bees. Produced in the spermatheca of adult queen bees, along with other major royal jelly proteins, where it may act as a nutrient supply for sperm stored by mated queens, or be involved in energy metabolism. The sequence is that of Major royal jelly protein 2 from Apis mellifera (Honeybee).